Consider the following 212-residue polypeptide: Adenylate kinase (212 aa).

Gly-10–Thr-15 is a binding site for ATP. Positions Ser-30 to Val-59 are NMP. AMP contacts are provided by residues Thr-31, Arg-36, Glu-57–Val-59, Gly-86–Arg-89, and Gln-93. An LID region spans residues Gly-127–Asp-159. ATP-binding positions include Arg-128 and Thr-137–Phe-138. AMP contacts are provided by Arg-156 and Arg-167. Gln-195 is an ATP binding site.

It belongs to the adenylate kinase family. As to quaternary structure, monomer.

It is found in the cytoplasm. The catalysed reaction is AMP + ATP = 2 ADP. It participates in purine metabolism; AMP biosynthesis via salvage pathway; AMP from ADP: step 1/1. Functionally, catalyzes the reversible transfer of the terminal phosphate group between ATP and AMP. Plays an important role in cellular energy homeostasis and in adenine nucleotide metabolism. This is Adenylate kinase from Streptococcus agalactiae serotype III (strain NEM316).